Here is a 430-residue protein sequence, read N- to C-terminus: Zinc carboxypeptidase A 1 (430 aa).

An N-terminal signal peptide occupies residues Met-1–Ala-22. The region spanning Gln-124–Val-423 is the Peptidase M14 domain. Zn(2+) contacts are provided by His-187 and Glu-190. An intrachain disulfide couples Cys-252 to Cys-275. His-311 serves as a coordination point for Zn(2+). Glu-386 acts as the Proton donor/acceptor in catalysis.

It belongs to the peptidase M14 family. The cofactor is Zn(2+).

It localises to the secreted. This chain is Zinc carboxypeptidase A 1, found in Drosophila melanogaster (Fruit fly).